The chain runs to 365 residues: Chorismate synthase (365 aa).

Position 48 (R48) interacts with NADP(+). FMN contacts are provided by residues R125–S127, N238–A239, G278, K293–S297, and R319.

Belongs to the chorismate synthase family. In terms of assembly, homotetramer. FMNH2 serves as cofactor.

It catalyses the reaction 5-O-(1-carboxyvinyl)-3-phosphoshikimate = chorismate + phosphate. It functions in the pathway metabolic intermediate biosynthesis; chorismate biosynthesis; chorismate from D-erythrose 4-phosphate and phosphoenolpyruvate: step 7/7. Functionally, catalyzes the anti-1,4-elimination of the C-3 phosphate and the C-6 proR hydrogen from 5-enolpyruvylshikimate-3-phosphate (EPSP) to yield chorismate, which is the branch point compound that serves as the starting substrate for the three terminal pathways of aromatic amino acid biosynthesis. This reaction introduces a second double bond into the aromatic ring system. The protein is Chorismate synthase of Ruthia magnifica subsp. Calyptogena magnifica.